A 563-amino-acid chain; its full sequence is Sulfite reductase [NADPH] hemoprotein beta-component (563 aa).

Residues cysteine 427, cysteine 433, cysteine 472, and cysteine 476 each contribute to the [4Fe-4S] cluster site. Cysteine 476 provides a ligand contact to siroheme.

The protein belongs to the nitrite and sulfite reductase 4Fe-4S domain family. As to quaternary structure, alpha(8)-beta(8). The alpha component is a flavoprotein, the beta component is a hemoprotein. The cofactor is siroheme. It depends on [4Fe-4S] cluster as a cofactor.

The enzyme catalyses hydrogen sulfide + 3 NADP(+) + 3 H2O = sulfite + 3 NADPH + 4 H(+). It participates in sulfur metabolism; hydrogen sulfide biosynthesis; hydrogen sulfide from sulfite (NADPH route): step 1/1. In terms of biological role, component of the sulfite reductase complex that catalyzes the 6-electron reduction of sulfite to sulfide. This is one of several activities required for the biosynthesis of L-cysteine from sulfate. This is Sulfite reductase [NADPH] hemoprotein beta-component from Shewanella frigidimarina (strain NCIMB 400).